A 493-amino-acid chain; its full sequence is Sulfoacetaldehyde dehydrogenase (acylating) (493 aa).

The segment covering 1–10 has biased composition (basic residues); it reads MSVQILHRRQ. The segment at 1–21 is disordered; the sequence is MSVQILHRRQSNNSDLPLPTA. Cys273 acts as the Nucleophile in catalysis.

Belongs to the aldehyde dehydrogenase family. In terms of assembly, homodimer.

The protein resides in the cytoplasm. The catalysed reaction is sulfoacetaldehyde + NADP(+) + CoA = sulfoacetyl-CoA + NADPH + H(+). Its function is as follows. Involved in the degradation of sulfoacetate, a widespread natural product. Catalyzes the conversion of sulfoacetyl-CoA and NADPH to sulfoacetaldehyde, CoA and NADP(+). Specific for NADP(+) and sulfoacetaldehyde. The polypeptide is Sulfoacetaldehyde dehydrogenase (acylating) (Cupriavidus necator (strain ATCC 17699 / DSM 428 / KCTC 22496 / NCIMB 10442 / H16 / Stanier 337) (Ralstonia eutropha)).